A 1414-amino-acid polypeptide reads, in one-letter code: DNA-directed RNA polymerase subunit beta' (1414 aa).

Zn(2+) contacts are provided by C70, C72, C85, and C88. Positions 460, 462, and 464 each coordinate Mg(2+). The Zn(2+) site is built by C815, C889, C896, and C899. The tract at residues 1395-1414 (EAEAQFADVSSTPDSDTDAS) is disordered.

Belongs to the RNA polymerase beta' chain family. As to quaternary structure, the RNAP catalytic core consists of 2 alpha, 1 beta, 1 beta' and 1 omega subunit. When a sigma factor is associated with the core the holoenzyme is formed, which can initiate transcription. Requires Mg(2+) as cofactor. Zn(2+) is required as a cofactor.

The enzyme catalyses RNA(n) + a ribonucleoside 5'-triphosphate = RNA(n+1) + diphosphate. Functionally, DNA-dependent RNA polymerase catalyzes the transcription of DNA into RNA using the four ribonucleoside triphosphates as substrates. The sequence is that of DNA-directed RNA polymerase subunit beta' from Janthinobacterium sp. (strain Marseille) (Minibacterium massiliensis).